The sequence spans 332 residues: Ornithine carbamoyltransferase, catabolic (332 aa).

Residues 60–63 (STRT), Gln87, Arg111, and 138–141 (HPTQ) contribute to the carbamoyl phosphate site. Residues Asn170, Asp230, and 234-235 (SM) each bind L-ornithine. Residues 271 to 272 (CL) and Arg316 contribute to the carbamoyl phosphate site.

It belongs to the aspartate/ornithine carbamoyltransferase superfamily. OTCase family.

It is found in the cytoplasm. The catalysed reaction is carbamoyl phosphate + L-ornithine = L-citrulline + phosphate + H(+). It functions in the pathway amino-acid degradation; L-arginine degradation via ADI pathway; carbamoyl phosphate from L-arginine: step 2/2. Functionally, reversibly catalyzes the transfer of the carbamoyl group from carbamoyl phosphate (CP) to the N(epsilon) atom of ornithine (ORN) to produce L-citrulline. This chain is Ornithine carbamoyltransferase, catabolic, found in Bacillus thuringiensis subsp. konkukian (strain 97-27).